A 101-amino-acid chain; its full sequence is MAKTSAVEKNKRREKLVKRHADKRARLKAIVMDQGLPLEERFRATIRLAELPRNSSKVRIRNRCEVSGRPRGYYRKLKMSRIALRQLGSLGQIPGIVKSSW.

The protein belongs to the universal ribosomal protein uS14 family. Part of the 30S ribosomal subunit. Contacts proteins S3 and S10.

Its function is as follows. Binds 16S rRNA, required for the assembly of 30S particles and may also be responsible for determining the conformation of the 16S rRNA at the A site. This chain is Small ribosomal subunit protein uS14, found in Brucella anthropi (strain ATCC 49188 / DSM 6882 / CCUG 24695 / JCM 21032 / LMG 3331 / NBRC 15819 / NCTC 12168 / Alc 37) (Ochrobactrum anthropi).